Consider the following 279-residue polypeptide: Protease HtpX homolog (279 aa).

The next 2 helical transmembrane spans lie at 4–24 (IFLF…VLAV) and 34–54 (GSLL…SLLM). Position 140 (His140) interacts with Zn(2+). Residue Glu141 is part of the active site. His144 contributes to the Zn(2+) binding site. 2 helical membrane passes run 155 to 175 (LIQG…ANLI) and 189 to 209 (FLVS…IVMW). Glu215 contributes to the Zn(2+) binding site.

This sequence belongs to the peptidase M48B family. Zn(2+) is required as a cofactor.

The protein localises to the cell inner membrane. The sequence is that of Protease HtpX homolog from Neisseria gonorrhoeae (strain ATCC 700825 / FA 1090).